A 253-amino-acid polypeptide reads, in one-letter code: uncharacterized protein (253 aa).

Residues 62-78 (WCSIGWSIGALIIFLVY) traverse the membrane as a helical segment. Positions 141–158 (TTPQTTTPEIPSSTEPQE) are enriched in low complexity. The disordered stretch occupies residues 141 to 225 (TTPQTTTPEI…HDNQPLEERH (85 aa)). Residues 200–216 (NVEDEPPPNKPEEEEDH) are compositionally biased toward acidic residues.

The protein localises to the host membrane. This is an uncharacterized protein from Aedes vexans (Inland floodwater mosquito).